The chain runs to 171 residues: Der GTPase-activating protein YihI (171 aa).

Disordered regions lie at residues 1–99 (MKKP…PQAE) and 145–171 (GLSY…KGGN). The segment covering 20 to 30 (TREELNQEARD) has biased composition (basic and acidic residues). Residues 40 to 59 (HSAGSRANGSSASGSTAQNS) are compositionally biased toward low complexity. Residues 148–160 (YEDDEDDEEEEKQ) show a composition bias toward acidic residues.

It belongs to the YihI family. Interacts with Der.

Functionally, a GTPase-activating protein (GAP) that modifies Der/EngA GTPase function. May play a role in ribosome biogenesis. The sequence is that of Der GTPase-activating protein YihI from Enterobacter sp. (strain 638).